The primary structure comprises 227 residues: Cytochrome c oxidase subunit 2 (227 aa).

At 1–14 (MAHSFQLGFQDATS) the chain is on the mitochondrial intermembrane side. Residues 15 to 45 (PIMEELLHFHDHTLMIVFLISSLVLYIITLM) traverse the membrane as a helical segment. Over 46 to 59 (LTTKLTHTSTMDAQ) the chain is Mitochondrial matrix. The helical transmembrane segment at 60–87 (EVETVWTILPAIILILIALPSLRILYLM) threads the bilayer. The Mitochondrial intermembrane portion of the chain corresponds to 88-227 (DEINTPSLTV…HFENWSTSMI (140 aa)). Residues His-161, Cys-196, Glu-198, Cys-200, His-204, and Met-207 each contribute to the Cu cation site. Glu-198 is a binding site for Mg(2+).

The protein belongs to the cytochrome c oxidase subunit 2 family. Component of the cytochrome c oxidase (complex IV, CIV), a multisubunit enzyme composed of 14 subunits. The complex is composed of a catalytic core of 3 subunits MT-CO1, MT-CO2 and MT-CO3, encoded in the mitochondrial DNA, and 11 supernumerary subunits COX4I, COX5A, COX5B, COX6A, COX6B, COX6C, COX7A, COX7B, COX7C, COX8 and NDUFA4, which are encoded in the nuclear genome. The complex exists as a monomer or a dimer and forms supercomplexes (SCs) in the inner mitochondrial membrane with NADH-ubiquinone oxidoreductase (complex I, CI) and ubiquinol-cytochrome c oxidoreductase (cytochrome b-c1 complex, complex III, CIII), resulting in different assemblies (supercomplex SCI(1)III(2)IV(1) and megacomplex MCI(2)III(2)IV(2)). Found in a complex with TMEM177, COA6, COX18, COX20, SCO1 and SCO2. Interacts with TMEM177 in a COX20-dependent manner. Interacts with COX20. Interacts with COX16. It depends on Cu cation as a cofactor.

The protein resides in the mitochondrion inner membrane. It catalyses the reaction 4 Fe(II)-[cytochrome c] + O2 + 8 H(+)(in) = 4 Fe(III)-[cytochrome c] + 2 H2O + 4 H(+)(out). Component of the cytochrome c oxidase, the last enzyme in the mitochondrial electron transport chain which drives oxidative phosphorylation. The respiratory chain contains 3 multisubunit complexes succinate dehydrogenase (complex II, CII), ubiquinol-cytochrome c oxidoreductase (cytochrome b-c1 complex, complex III, CIII) and cytochrome c oxidase (complex IV, CIV), that cooperate to transfer electrons derived from NADH and succinate to molecular oxygen, creating an electrochemical gradient over the inner membrane that drives transmembrane transport and the ATP synthase. Cytochrome c oxidase is the component of the respiratory chain that catalyzes the reduction of oxygen to water. Electrons originating from reduced cytochrome c in the intermembrane space (IMS) are transferred via the dinuclear copper A center (CU(A)) of subunit 2 and heme A of subunit 1 to the active site in subunit 1, a binuclear center (BNC) formed by heme A3 and copper B (CU(B)). The BNC reduces molecular oxygen to 2 water molecules using 4 electrons from cytochrome c in the IMS and 4 protons from the mitochondrial matrix. The chain is Cytochrome c oxidase subunit 2 (MT-CO2) from Cephalopachus bancanus (Western tarsier).